Reading from the N-terminus, the 212-residue chain is Thymidylate kinase (212 aa).

Gly-11–Ser-18 provides a ligand contact to ATP.

This sequence belongs to the thymidylate kinase family.

It catalyses the reaction dTMP + ATP = dTDP + ADP. Functionally, phosphorylation of dTMP to form dTDP in both de novo and salvage pathways of dTTP synthesis. This is Thymidylate kinase from Vibrio vulnificus (strain CMCP6).